Reading from the N-terminus, the 76-residue chain is UPF0154 protein Sca_0984 (76 aa).

Residues W4 to L24 form a helical membrane-spanning segment.

This sequence belongs to the UPF0154 family.

The protein localises to the cell membrane. This is UPF0154 protein Sca_0984 from Staphylococcus carnosus (strain TM300).